The primary structure comprises 428 residues: Glutamate-1-semialdehyde 2,1-aminomutase 1 (428 aa).

Position 268 is an N6-(pyridoxal phosphate)lysine (Lys-268).

The protein belongs to the class-III pyridoxal-phosphate-dependent aminotransferase family. HemL subfamily. Homodimer. The cofactor is pyridoxal 5'-phosphate.

The protein localises to the cytoplasm. The enzyme catalyses (S)-4-amino-5-oxopentanoate = 5-aminolevulinate. Its pathway is porphyrin-containing compound metabolism; protoporphyrin-IX biosynthesis; 5-aminolevulinate from L-glutamyl-tRNA(Glu): step 2/2. The sequence is that of Glutamate-1-semialdehyde 2,1-aminomutase 1 from Geobacillus kaustophilus (strain HTA426).